The primary structure comprises 381 residues: Cytochrome b (381 aa).

The next 4 membrane-spanning stretches (helical) occupy residues 33–53, 77–98, 113–133, and 178–198; these read FGSLLGICLVIQILTGLFLAM, WLIRNLHANGASMFFMCLFLHV, WNIGVMLLLTVTATAFVGYVL, and FFALHFLLPFVIAGLTLVHLT. Positions 83 and 97 each coordinate heme b. Heme b contacts are provided by H182 and H196. Residue H201 participates in a ubiquinone binding. Helical transmembrane passes span 226–246, 288–308, 320–340, and 347–367; these read IKDILGLMFLLLVLLSLALFS, LGGVLALLASILILLVIPFLH, ISQTLFWILTANLITLTWIGG, and FIIIGQPASILYFPLIHHPMP.

Belongs to the cytochrome b family. The cytochrome bc1 complex contains 11 subunits: 3 respiratory subunits (MT-CYB, CYC1 and UQCRFS1), 2 core proteins (UQCRC1 and UQCRC2) and 6 low-molecular weight proteins (UQCRH/QCR6, UQCRB/QCR7, UQCRQ/QCR8, UQCR10/QCR9, UQCR11/QCR10 and a cleavage product of UQCRFS1). This cytochrome bc1 complex then forms a dimer. The cofactor is heme b.

Its subcellular location is the mitochondrion inner membrane. Its function is as follows. Component of the ubiquinol-cytochrome c reductase complex (complex III or cytochrome b-c1 complex) that is part of the mitochondrial respiratory chain. The b-c1 complex mediates electron transfer from ubiquinol to cytochrome c. Contributes to the generation of a proton gradient across the mitochondrial membrane that is then used for ATP synthesis. The polypeptide is Cytochrome b (MT-CYB) (Sminthopsis youngsoni (Lesser hairy-footed dunnart)).